Here is a 1483-residue protein sequence, read N- to C-terminus: Dynein axonemal assembly factor 1 homolog (1483 aa).

LRR repeat units lie at residues 34 to 56 (RLND…EEYT), 57 to 78 (ELKC…EKLS), 79 to 100 (KLKC…DPCR), 101 to 122 (ELDT…GTNV), 125 to 146 (VLNT…SDLI), and 150 to 171 (TLSV…KIFE). One can recognise an LRRCT domain in the interval 185 to 223 (PVVSRLPQYRKTLILACKELTYLDSRPVFPRDRACAEAW). Disordered stretches follow at residues 249–282 (SINC…TCAE), 300–327 (EEVS…GTSS), 945–986 (DSGD…HGTK), and 1167–1213 (SENE…SIDD). Residues 311–327 (DGTNSSSSLEDNDGTSS) show a composition bias toward polar residues. Residues 1183–1196 (TNDKESSDIMEKNG) show a composition bias toward basic and acidic residues.

Belongs to the DNAAF1 family.

The protein resides in the cell projection. Its subcellular location is the cilium. Functionally, cilium-specific protein required for cilia structures. The chain is Dynein axonemal assembly factor 1 homolog (dtr) from Drosophila melanogaster (Fruit fly).